A 427-amino-acid polypeptide reads, in one-letter code: Cyclin-L1-1 (427 aa).

The interval 258–427 (HRRTSDTNAS…SRDKDRHRRQ (170 aa)) is disordered. Residues 263–276 (DTNASKESPATTVA) show a composition bias toward polar residues. 4 stretches are compositionally biased toward basic and acidic residues: residues 289-311 (QEKD…DDGK), 328-382 (KSEK…DRDR), 390-400 (DRSSGYSDKEK), and 407-421 (RDRG…SRDK).

This sequence belongs to the cyclin family. Cyclin L subfamily.

The polypeptide is Cyclin-L1-1 (CYCL1-1) (Oryza sativa subsp. japonica (Rice)).